Reading from the N-terminus, the 154-residue chain is Putative flagella-related protein G (154 aa).

Residues methionine 9–leucine 29 traverse the membrane as a helical segment.

This sequence belongs to the archaeal FlaG family.

It is found in the cell membrane. The protein resides in the archaeal flagellum. This chain is Putative flagella-related protein G (flaG), found in Methanocaldococcus jannaschii (strain ATCC 43067 / DSM 2661 / JAL-1 / JCM 10045 / NBRC 100440) (Methanococcus jannaschii).